The chain runs to 314 residues: MRIGIVVDSACDLPQDFIQRHNIVVLPISVRIGEAVLADHRDEEATLSFLQAHVAERGHEAETTPFSVNQIRDLFLQQLVIDYDHVFCLTISKLRSQIFDNAMQASFAILNDYKPIRQAAGHTSPFALRVIDTLNLFAGQGITAVEAARLRDQGQSVAVIRTRLEQLAEHTYGYMIPRDLYYLRARARTKGDRSVGLIGAALGSALDIKPVLRAYRGVTEPVAKLKGFEPSAEKLFGFTVRKIRDGLMTPTVCVGYGGELAELHALPGYAALQGACQTHGVELLESVMSLTGMVNVGKGALAVGFAAEPHAFSA.

In terms of domain architecture, DegV spans 3–307 (IGIVVDSACD…KGALAVGFAA (305 aa)). The hexadecanoate site is built by Thr-63 and Ser-96.

Functionally, may bind long-chain fatty acids, such as palmitate, and may play a role in lipid transport or fatty acid metabolism. The chain is DegV domain-containing protein XAC3508 from Xanthomonas axonopodis pv. citri (strain 306).